We begin with the raw amino-acid sequence, 383 residues long: TOM1-like protein 2 (383 aa).

The VHS domain occupies 45–178 (ATLETLEEPN…GLHARGEENS (134 aa)). In terms of domain architecture, GAT spans 223–310 (LSIKDKKEQI…VLSSYKKPDE (88 aa)). Residues 305–383 (YKKPDETEKK…LGLSSDEDEK (79 aa)) are disordered. Basic and acidic residues-rich tracts occupy residues 306 to 316 (KKPDETEKKAS) and 339 to 354 (EPVK…KHSE). Residues Ser377 and Ser378 each carry the phosphoserine modification.

Belongs to the TOM1 family. Ubiquitously expressed.

The protein resides in the cytoplasm. It localises to the membrane. Functionally, binds ubiquitin in vitro. Might contribute to the loading of the ESCRT machinery. The sequence is that of TOM1-like protein 2 from Arabidopsis thaliana (Mouse-ear cress).